The primary structure comprises 264 residues: uncharacterized protein (264 aa).

A helical transmembrane segment spans residues 7 to 27; it reads LTLGICLVLLIILIVGYVIMT.

This sequence belongs to the staphylococcal tandem lipoprotein family.

The protein resides in the cell membrane. This is an uncharacterized protein from Staphylococcus aureus (strain MW2).